We begin with the raw amino-acid sequence, 311 residues long: MIKLLFMGTPQFSATVLKGLLDNPAYEILGVVTQPDRAVGRKKDIKVTPVKQLALEHGISIYQPEKLSGSQELIEIMGLGADGIITAAFGQFLPTLLLDSVSFAINVHASLLPKYRGGAPIHYAIMNGDKEAGVTIMEMIKEMDAGDMVAKASTPILETDNVGTLFEKLAIIGRDLLLDSLPAYLSGELKPIPQDHSQATFSPNISPEQEKLDWTMSNQEVFNHIRGMNPWPVAHTFLEGQRLKIYEAQLAEGEGLPGQVIVKTKKSLVIATGQGALSLIVVQPAGKPKMSIIDFLNGIGRKLEVGDIIGR.

Position 110-113 (110-113) interacts with (6S)-5,6,7,8-tetrahydrofolate; sequence SLLP.

This sequence belongs to the Fmt family.

It catalyses the reaction L-methionyl-tRNA(fMet) + (6R)-10-formyltetrahydrofolate = N-formyl-L-methionyl-tRNA(fMet) + (6S)-5,6,7,8-tetrahydrofolate + H(+). Its function is as follows. Attaches a formyl group to the free amino group of methionyl-tRNA(fMet). The formyl group appears to play a dual role in the initiator identity of N-formylmethionyl-tRNA by promoting its recognition by IF2 and preventing the misappropriation of this tRNA by the elongation apparatus. The polypeptide is Methionyl-tRNA formyltransferase (Streptococcus pyogenes serotype M12 (strain MGAS2096)).